Reading from the N-terminus, the 198-residue chain is NAD(P)H quinone oxidoreductase PST1 (198 aa).

Residues 6–192 (VAIIIYSLYH…AIAKQQGEDF (187 aa)) enclose the Flavodoxin-like domain. Residues 12–16 (SLYHH) and 112–164 (VFVW…SPWG) each bind FMN.

This sequence belongs to the WrbA family. FMN serves as cofactor.

The protein resides in the cell membrane. The enzyme catalyses a quinone + NADH + H(+) = a quinol + NAD(+). It carries out the reaction a quinone + NADPH + H(+) = a quinol + NADP(+). Flavodoxin-like protein (FLP) that plays a role in cell wall integrity, oxidative stress protection and virulence. FLPs act as NAD(P)H quinone oxidoreductases. Reduces ubiquinone (coenzyme Q), enabling it to serve as an antioxidant in the membrane. The sequence is that of NAD(P)H quinone oxidoreductase PST1 from Candida albicans (strain SC5314 / ATCC MYA-2876) (Yeast).